Consider the following 619-residue polypeptide: Dihydroxy-acid dehydratase (619 aa).

Aspartate 81 contacts Mg(2+). Position 122 (cysteine 122) interacts with [2Fe-2S] cluster. Mg(2+)-binding residues include aspartate 123 and lysine 124. Lysine 124 bears the N6-carboxylysine mark. Residue cysteine 198 participates in [2Fe-2S] cluster binding. Residue glutamate 494 coordinates Mg(2+). Catalysis depends on serine 520, which acts as the Proton acceptor.

The protein belongs to the IlvD/Edd family. In terms of assembly, homodimer. It depends on [2Fe-2S] cluster as a cofactor. Requires Mg(2+) as cofactor.

It carries out the reaction (2R)-2,3-dihydroxy-3-methylbutanoate = 3-methyl-2-oxobutanoate + H2O. The catalysed reaction is (2R,3R)-2,3-dihydroxy-3-methylpentanoate = (S)-3-methyl-2-oxopentanoate + H2O. It functions in the pathway amino-acid biosynthesis; L-isoleucine biosynthesis; L-isoleucine from 2-oxobutanoate: step 3/4. The protein operates within amino-acid biosynthesis; L-valine biosynthesis; L-valine from pyruvate: step 3/4. Its function is as follows. Functions in the biosynthesis of branched-chain amino acids. Catalyzes the dehydration of (2R,3R)-2,3-dihydroxy-3-methylpentanoate (2,3-dihydroxy-3-methylvalerate) into 2-oxo-3-methylpentanoate (2-oxo-3-methylvalerate) and of (2R)-2,3-dihydroxy-3-methylbutanoate (2,3-dihydroxyisovalerate) into 2-oxo-3-methylbutanoate (2-oxoisovalerate), the penultimate precursor to L-isoleucine and L-valine, respectively. In Neisseria meningitidis serogroup A / serotype 4A (strain DSM 15465 / Z2491), this protein is Dihydroxy-acid dehydratase.